A 176-amino-acid polypeptide reads, in one-letter code: Ribosome maturation factor RimM (176 aa).

The region spanning 94–176 (KDEFFYFEIL…RFGFEILQNS (83 aa)) is the PRC barrel domain.

It belongs to the RimM family. Binds ribosomal protein uS19.

It localises to the cytoplasm. Functionally, an accessory protein needed during the final step in the assembly of 30S ribosomal subunit, possibly for assembly of the head region. Essential for efficient processing of 16S rRNA. May be needed both before and after RbfA during the maturation of 16S rRNA. It has affinity for free ribosomal 30S subunits but not for 70S ribosomes. The polypeptide is Ribosome maturation factor RimM (Campylobacter hominis (strain ATCC BAA-381 / DSM 21671 / CCUG 45161 / LMG 19568 / NCTC 13146 / CH001A)).